The following is a 277-amino-acid chain: Putative pyruvate, phosphate dikinase regulatory protein (277 aa).

Residue 156–163 (GVSRTSKT) coordinates ADP.

Belongs to the pyruvate, phosphate/water dikinase regulatory protein family. PDRP subfamily.

It catalyses the reaction N(tele)-phospho-L-histidyl/L-threonyl-[pyruvate, phosphate dikinase] + ADP = N(tele)-phospho-L-histidyl/O-phospho-L-threonyl-[pyruvate, phosphate dikinase] + AMP + H(+). The catalysed reaction is N(tele)-phospho-L-histidyl/O-phospho-L-threonyl-[pyruvate, phosphate dikinase] + phosphate + H(+) = N(tele)-phospho-L-histidyl/L-threonyl-[pyruvate, phosphate dikinase] + diphosphate. Bifunctional serine/threonine kinase and phosphorylase involved in the regulation of the pyruvate, phosphate dikinase (PPDK) by catalyzing its phosphorylation/dephosphorylation. The chain is Putative pyruvate, phosphate dikinase regulatory protein from Carboxydothermus hydrogenoformans (strain ATCC BAA-161 / DSM 6008 / Z-2901).